The following is a 767-amino-acid chain: Cullin-1 (767 aa).

Residues 699-760 (DRKLLLQSAI…EKEYLERQGR (62 aa)) form the Cullin neddylation domain. Lys713 is covalently cross-linked (Glycyl lysine isopeptide (Lys-Gly) (interchain with G-Cter in NEDD8)).

It belongs to the cullin family. As to quaternary structure, component of multiple Cul1-RING E3 ubiquitin-protein ligase complexes commonly known as SCF (SKP1-CUL1-F-box) complexes, consisting of cul1, skp1, pip1 and a variable F-box domain-containing protein as substrate-specific subunit. Binds to the pop1 homodimer, the pop2 homodimer and the pop1/pop2 heterodimer forming the SCF(pop1-pop2) complex. Interacts with pof3, pof14 and skp1. Post-translationally, neddylated; enhancing the ubiquitin-ligase activity.

It localises to the cytoplasm. Its pathway is protein modification; protein ubiquitination. Functionally, core component of multiple cullin-RING-based SCF (SKP1-CUL1-F-box protein) E3 ubiquitin-protein ligase complexes, which mediate the ubiquitination of target proteins. The functional specificity of the SCF complex depends on the F-box protein as substrate recognition component. SCF(pop1-pop2) is required for the maintenance of ploidy and directs ubiquitination of cig2. This Schizosaccharomyces pombe (strain 972 / ATCC 24843) (Fission yeast) protein is Cullin-1 (cul1).